We begin with the raw amino-acid sequence, 278 residues long: Large ribosomal subunit protein uL2 (278 aa).

Residues 222-278 form a disordered region; that stretch reads GVVMNPIDHPHGGGEGRTSGGRHPVTPWGKPTKGKKTRSNKSTDKFILISRHKRKKK.

The protein belongs to the universal ribosomal protein uL2 family. In terms of assembly, part of the 50S ribosomal subunit. Forms a bridge to the 30S subunit in the 70S ribosome.

Functionally, one of the primary rRNA binding proteins. Required for association of the 30S and 50S subunits to form the 70S ribosome, for tRNA binding and peptide bond formation. It has been suggested to have peptidyltransferase activity; this is somewhat controversial. Makes several contacts with the 16S rRNA in the 70S ribosome. In Rhodopseudomonas palustris (strain BisB5), this protein is Large ribosomal subunit protein uL2.